A 222-amino-acid polypeptide reads, in one-letter code: ATP-dependent dethiobiotin synthetase BioD (222 aa).

Asp12–Ile17 contributes to the ATP binding site. Thr16 is a Mg(2+) binding site. Lys37 is an active-site residue. Thr41 provides a ligand contact to substrate. Residues Asp49, Glu107–Gly110, Gly167–Ser168, and Ala197–Gly199 contribute to the ATP site. Mg(2+)-binding residues include Asp49 and Glu107.

The protein belongs to the dethiobiotin synthetase family. In terms of assembly, homodimer. It depends on Mg(2+) as a cofactor.

It localises to the cytoplasm. It catalyses the reaction (7R,8S)-7,8-diammoniononanoate + CO2 + ATP = (4R,5S)-dethiobiotin + ADP + phosphate + 3 H(+). The protein operates within cofactor biosynthesis; biotin biosynthesis; biotin from 7,8-diaminononanoate: step 1/2. In terms of biological role, catalyzes a mechanistically unusual reaction, the ATP-dependent insertion of CO2 between the N7 and N8 nitrogen atoms of 7,8-diaminopelargonic acid (DAPA, also called 7,8-diammoniononanoate) to form a ureido ring. The polypeptide is ATP-dependent dethiobiotin synthetase BioD (Corynebacterium diphtheriae (strain ATCC 700971 / NCTC 13129 / Biotype gravis)).